We begin with the raw amino-acid sequence, 319 residues long: tRNA U34 carboxymethyltransferase (319 aa).

Residues Lys-88, Trp-102, Lys-107, Gly-126, 176-177 (LE), Met-192, Tyr-196, and Arg-311 contribute to the carboxy-S-adenosyl-L-methionine site.

Belongs to the class I-like SAM-binding methyltransferase superfamily. CmoB family. Homotetramer.

It catalyses the reaction carboxy-S-adenosyl-L-methionine + 5-hydroxyuridine(34) in tRNA = 5-carboxymethoxyuridine(34) in tRNA + S-adenosyl-L-homocysteine + H(+). Its function is as follows. Catalyzes carboxymethyl transfer from carboxy-S-adenosyl-L-methionine (Cx-SAM) to 5-hydroxyuridine (ho5U) to form 5-carboxymethoxyuridine (cmo5U) at position 34 in tRNAs. The sequence is that of tRNA U34 carboxymethyltransferase from Azotobacter vinelandii (strain DJ / ATCC BAA-1303).